We begin with the raw amino-acid sequence, 319 residues long: Transcription factor VBP (319 aa).

Composition is skewed to low complexity over residues 1-31 (MPGR…GAVA) and 143-158 (ASAS…STAV). 2 disordered regions span residues 1–35 (MPGR…QQPE) and 139–186 (EKEP…DPDC). Residues 159–180 (YQQSEAASSTESPPQNERNTPS) show a composition bias toward polar residues. Residues 243 to 306 (DEKYWTRRKK…GRCKNIVSKY (64 aa)) enclose the bZIP domain. Residues 245-265 (KYWTRRKKNNVAAKRSRDARR) form a basic motif region. The tract at residues 266–273 (LKENQITI) is leucine-zipper.

This sequence belongs to the bZIP family. PAR subfamily. In terms of assembly, binds DNA as a homodimer or a heterodimer. Exists as a stable dimer in the absence of DNA. In terms of tissue distribution, isoform 1 and isoform 3 are expressed in a variety of somatic tissues, including liver, heart, intestine, stomach and kidney. Both isoforms are also expressed in hepatoma (LMH) cells and in embryonic fibroblast cell lines. Isoform 2 and isoform 4 are expressed in adult heart and intestine.

The protein localises to the nucleus. Transcription factor that binds to and transactivates the vitellogenin II (VTG2) promoter. Binds to the palindromic sequence 5'-GTTTACATAAAC-3'. The protein is Transcription factor VBP (TEF) of Gallus gallus (Chicken).